Consider the following 417-residue polypeptide: Serpin H1 (417 aa).

The first 18 residues, 1 to 18, serve as a signal peptide directing secretion; that stretch reads MRSLLLLSAFCLLEAALA. The residue at position 94 (K94) is an N6-succinyllysine. N120 and N125 each carry an N-linked (GlcNAc...) asparagine glycan. S141 is subject to Phosphoserine. K206 carries the N6-acetyllysine modification. The residue at position 295 (K295) is an N6-succinyllysine. Residue K318 is modified to N6-acetyllysine. A Prevents secretion from ER motif is present at residues 414–417; that stretch reads RDEL.

The protein belongs to the serpin family.

The protein localises to the endoplasmic reticulum lumen. Binds specifically to collagen. Could be involved as a chaperone in the biosynthetic pathway of collagen. This chain is Serpin H1 (SERPINH1), found in Pongo abelii (Sumatran orangutan).